Reading from the N-terminus, the 382-residue chain is Putative acetyl-CoA C-acetyltransferase VraB (382 aa).

The active-site Acyl-thioester intermediate is cysteine 86. Histidine 338 functions as the Proton acceptor in the catalytic mechanism.

It belongs to the thiolase-like superfamily. Thiolase family.

In Staphylococcus epidermidis (strain ATCC 12228 / FDA PCI 1200), this protein is Putative acetyl-CoA C-acetyltransferase VraB (vraB).